The sequence spans 217 residues: Uracil-DNA glycosylase (217 aa).

Aspartate 62 (proton acceptor) is an active-site residue.

Belongs to the uracil-DNA glycosylase (UDG) superfamily. UNG family.

The protein resides in the cytoplasm. It carries out the reaction Hydrolyzes single-stranded DNA or mismatched double-stranded DNA and polynucleotides, releasing free uracil.. In terms of biological role, excises uracil residues from the DNA which can arise as a result of misincorporation of dUMP residues by DNA polymerase or due to deamination of cytosine. The polypeptide is Uracil-DNA glycosylase (Streptococcus pyogenes serotype M18 (strain MGAS8232)).